Consider the following 117-residue polypeptide: MNNIIKMLNDEQMKKDVPDFGPGDTVVVQVRVKEGDKERLQAFEGVVIAKRNRGLHSAFTVRKISNGEGVERAFQTHSPLISSIEVKRRGRVRRAKLYYLRERSGKSARIREKLATK.

The protein belongs to the bacterial ribosomal protein bL19 family.

In terms of biological role, this protein is located at the 30S-50S ribosomal subunit interface and may play a role in the structure and function of the aminoacyl-tRNA binding site. The sequence is that of Large ribosomal subunit protein bL19 from Shewanella amazonensis (strain ATCC BAA-1098 / SB2B).